We begin with the raw amino-acid sequence, 964 residues long: Insulin receptor substrate 1 (964 aa).

Residues 8 to 109 (GMALSGNLKK…WLDKLLVLQR (102 aa)) enclose the PH domain. Positions 122-236 (YDQVWQVVIQ…SAMSAKTESN (115 aa)) constitute an IRS-type PTB domain. Residues 249-268 (LSHEPMRKRSSSANEASKPI) form a disordered region. Ser286, Ser287, and Ser342 each carry phosphoserine. Tyr410 carries the phosphotyrosine; by INSR modification. A YXXM motif 1 motif is present at residues 410–413 (YIPM). The interval 527-560 (ASNRSQSSIGKEGSSYGSSANRQKKSTSAPLLSL) is disordered. The segment covering 528–560 (SNRSQSSIGKEGSSYGSSANRQKKSTSAPLLSL) has biased composition (polar residues). A Phosphoserine modification is found at Ser554. The YXXM motif 2 motif lies at 640–643 (YLEM). Basic and acidic residues predominate over residues 698–712 (EKWREQPSRSEEKKS). A disordered region spans residues 698-735 (EKWREQPSRSEEKKSNSPLNDNPFSLKPTNVESKSKSH). The segment covering 713–729 (NSPLNDNPFSLKPTNVE) has biased composition (polar residues). At Tyr907 the chain carries Phosphotyrosine; by INSR. A disordered region spans residues 921–964 (AKYLKRGSRESPPVSACPEDGNTYARIDFDQSDSSSSSSNIFNT). A phosphoserine mark is found at Ser928 and Ser931. Tyr944 is subject to Phosphotyrosine; by INSR. The span at 952–964 (SDSSSSSSNIFNT) shows a compositional bias: low complexity.

In terms of assembly, bindings to phosphatidylinositol 3-kinase and SHP2.

In terms of biological role, activates phosphatidylinositol 3-kinase when bound to the regulatory p85 subunit. May mediate the control of various cellular processes by insulin-like peptides. When phosphorylated by the insulin receptor binds specifically to various cellular proteins containing SH2 domains. Involved in control of cell proliferation, cell size, and body and organ growth throughout development. Also has a role in a signaling pathway controlling the physiological response required to endure periods of low nutrient conditions. Insulin/insulin-like growth factor (IGF) signaling pathway has a role in regulating aging and is necessary in the ovary for vitellogenic maturation. In Drosophila sechellia (Fruit fly), this protein is Insulin receptor substrate 1.